The sequence spans 2089 residues: Mediator of DNA damage checkpoint protein 1 (2089 aa).

Over residues 1–19 (MEDTQAIDWDVEEEEETEQ) the composition is skewed to acidic residues. Residues 1–22 (MEDTQAIDWDVEEEEETEQSSE) form a disordered region. The interval 1 to 150 (MEDTQAIDWD…SRGPLTVEET (150 aa)) is interaction with CHEK2. The segment at 2–220 (EDTQAIDWDV…PFAFNLNSDT (219 aa)) is interaction with the MRN complex. Threonine 4 carries the phosphothreonine; by ATM modification. In terms of domain architecture, FHA spans 54–105 (NVVGRMPDCSVALPFPSISKQHAEIEILAWDKAPILRDCGSLNGTQILRPPK). The residue at position 108 (serine 108) is a Phosphoserine. The interval 145 to 568 (LTVEETPRVQ…PAKLLVVSLE (424 aa)) is required for nuclear localization (NLS1). Threonine 146 carries the phosphothreonine modification. Serine 168 bears the Phosphoserine; by CK2 mark. Serine 176 bears the Phosphoserine mark. Disordered stretches follow at residues 185 to 248 (RTTS…AKQS), 261 to 280 (DQPL…GAGN), and 286 to 317 (GVIL…AEVH). A phosphoserine; by CK2 mark is found at serine 196 and serine 218. Position 220 is a phosphothreonine; by CK2 (threonine 220). The segment covering 261 to 274 (DQPLVKERDNDTKV) has biased composition (basic and acidic residues). Serine 299 is subject to Phosphoserine; by CK2. A Phosphothreonine; by CK2 modification is found at threonine 301. Basic and acidic residues predominate over residues 306-317 (DSRPPGRPAEVH). Serine 329 is subject to Phosphoserine; by CK2. Threonine 331 carries the phosphothreonine; by CK2 modification. A Phosphoserine modification is found at serine 372. Serine 376 is subject to Phosphoserine; by CK2. Threonine 378 is subject to Phosphothreonine; by CK2. Residues serine 394 and serine 397 each carry the phosphoserine modification. Serine 402 bears the Phosphoserine; by CK2 mark. Phosphothreonine; by CK2 is present on threonine 404. At serine 411 the chain carries Phosphoserine. Position 449 is a phosphothreonine (threonine 449). Serine 453 is modified (phosphoserine; by CK2). The residue at position 455 (threonine 455) is a Phosphothreonine; by CK2. The disordered stretch occupies residues 482-515 (RAHSEKDQPPFGDSDDSVEADKSSPGIHLERSQA). 6 positions are modified to phosphoserine: serine 485, serine 495, serine 498, serine 504, serine 505, and serine 513. Threonine 523 is modified (phosphothreonine). Serine 590 is modified (phosphoserine). Residue lysine 616 forms a Glycyl lysine isopeptide (Lys-Gly) (interchain with G-Cter in SUMO1); alternate linkage. Residue lysine 616 forms a Glycyl lysine isopeptide (Lys-Gly) (interchain with G-Cter in SUMO2); alternate linkage. 2 disordered regions span residues 653-689 (DTLG…DNYG) and 780-1887 (SPPR…TKLN). Residues 671-685 (GREREQHVGGTKDSE) are compositionally biased toward basic and acidic residues. 2 positions are modified to phosphoserine: serine 780 and serine 793. Lysine 812 carries the N6-acetyllysine modification. Basic and acidic residues-rich tracts occupy residues 819–844 (ETAE…ERQT), 851–862 (ELTKGKQDREQK), 868–905 (DTQR…EKQV), and 914–951 (AFER…RGEP). Phosphoserine occurs at positions 955 and 998. A compositionally biased stretch (polar residues) spans 955 to 965 (SQDQKGQASSP). Positions 1016–1031 (KASRIRAAEKVSRGDQ) are enriched in basic and acidic residues. Serine 1033 bears the Phosphoserine mark. Residues 1040 to 1051 (PTVPEAPAPPQK) show a composition bias toward pro residues. A phosphoserine mark is found at serine 1068 and serine 1086. The span at 1103-1113 (PKPKIRTRKSS) shows a compositional bias: basic residues. The segment covering 1129–1156 (PSTSTAQPVTPKPTSQATRSRTNRSSVK) has biased composition (polar residues). The interaction with the PRKDC complex stretch occupies residues 1148–1610 (SRTNRSSVKT…TNRSSVKTPE (463 aa)). Threonine 1157 is subject to Phosphothreonine. The span at 1169–1187 (QPSTSTDQPVTSEPTSQVT) shows a compositional bias: polar residues. Threonine 1198 is subject to Phosphothreonine. Residues 1210-1228 (QPSTSTDRPVTSEPTSQAT) are compositionally biased toward polar residues. Serine 1235 is modified (phosphoserine). At threonine 1239 the chain carries Phosphothreonine. Positions 1251 to 1268 (QPSTSTDQPVTSEPTYQA) are enriched in polar residues. Threonine 1280 and threonine 1302 each carry phosphothreonine. Composition is skewed to low complexity over residues 1304–1318 (KPTS…NMSS) and 1347–1359 (TSRT…NMSS). Over residues 1375 to 1391 (PSTSTEQPVTPEPTSRA) the composition is skewed to polar residues. 2 positions are modified to phosphoserine: serine 1399 and serine 1400. Lysine 1402 carries the N6-acetyllysine modification. Phosphothreonine is present on threonine 1403. A Glycyl lysine isopeptide (Lys-Gly) (interchain with G-Cter in SUMO1); alternate cross-link involves residue lysine 1413. A Glycyl lysine isopeptide (Lys-Gly) (interchain with G-Cter in SUMO2); alternate cross-link involves residue lysine 1413. Composition is skewed to polar residues over residues 1416–1444 (PSTS…SVKT), 1456–1475 (QPST…QATR), 1498–1514 (ASAS…TSRT), and 1538–1555 (QPST…TSRA). Residues threonine 1425 and threonine 1466 each carry the phosphothreonine modification. Threonine 1548 carries the post-translational modification Phosphothreonine. Serine 1564 carries the phosphoserine modification. Phosphothreonine is present on residues threonine 1567 and threonine 1589. Over residues 1579-1596 (QPSTSRNQLVTPEPTSRA) the composition is skewed to polar residues. A Phosphoserine modification is found at serine 1604. Position 1608 is a phosphothreonine (threonine 1608). Over residues 1611–1620 (PVVPTAPEPH) the composition is skewed to pro residues. Polar residues predominate over residues 1624–1636 (STDQPVTPKLTSR). A phosphothreonine mark is found at threonine 1630, threonine 1664, and threonine 1671. Residues 1678–1689 (GGQSKTLRSSTV) are compositionally biased toward polar residues. Serine 1681 bears the Phosphoserine mark. Threonine 1697 is subject to Phosphothreonine. Over residues 1698–1719 (PEFQSPVTTDQPISPEPITQPS) the composition is skewed to polar residues. Residues 1698–2089 (PEFQSPVTTD…VLSPLEMSST (392 aa)) form a required for nuclear localization (NLS2) region. Residues serine 1702 and serine 1711 each carry the phosphoserine modification. Lysine 1740 is covalently cross-linked (Glycyl lysine isopeptide (Lys-Gly) (interchain with G-Cter in SUMO2)). Serine 1775 bears the Phosphoserine mark. Lysine 1790 is covalently cross-linked (Glycyl lysine isopeptide (Lys-Gly) (interchain with G-Cter in SUMO2)). Threonine 1800 carries the post-translational modification Phosphothreonine. The residue at position 1820 (serine 1820) is a Phosphoserine. Residues 1823–1836 (HQKQPQRGEVSQKT) are compositionally biased toward polar residues. Lysine 1840 is covalently cross-linked (Glycyl lysine isopeptide (Lys-Gly) (interchain with G-Cter in SUMO1); alternate). A Glycyl lysine isopeptide (Lys-Gly) (interchain with G-Cter in SUMO2); alternate cross-link involves residue lysine 1840. The segment covering 1847–1857 (AEKPGKEEDVV) has biased composition (basic and acidic residues). Residue threonine 1858 is modified to Phosphothreonine. BRCT domains lie at 1892–1970 (APKV…EYVV) and 1991–2082 (RERR…FVLS). At arginine 1943 the chain carries Omega-N-methylarginine.

In terms of assembly, homodimer. Interacts with H2AX, which requires phosphorylation of H2AX on 'Ser-139'. Interacts with the MRN complex, composed of MRE11, RAD50, and NBN. Interacts with CHEK2, which requires ATM-mediated phosphorylation of 'Thr-68' within the FHA domain of CHEK2. Interacts constitutively with the BRCA1-BARD1 complex, SMC1A and TP53BP1. Interacts with ATM and FANCD2, and these interactions are reduced upon DNA damage. Also interacts with the PRKDC complex, composed of XRCC6/KU70, XRCC5/KU80 and PRKDC/XRCC7. This interaction may be required for PRKDC autophosphorylation, which is essential for DNA double strand break (DSB) repair. When phosphorylated by ATM, interacts with RNF8 (via FHA domain). Interacts with CEP164. When phosphorylated, interacts with APTX (via FHA-like domain). Interacts (when phosphorylated) with TOPBP1; promoting TOPBP1 localization to DNA damage sites during mitosis. Interacts (when phosphorylated) with NBN; promoting NBN and MRN complex localization to DNA damage sites. Phosphorylated upon exposure to ionizing radiation (IR), ultraviolet radiation (UV), and hydroxyurea (HU). Phosphorylation in response to IR requires ATM, NBN, and possibly CHEK2. Also phosphorylated during the G2/M phase of the cell cycle and during activation of the mitotic spindle checkpoint. Phosphorylation at Thr-4 by ATM stabilizes and enhances homodimerization via the FHA domain. Phosphorylated at Ser-168 and Ser-196 by CK2 in response to DNA damage during mitosis, promoting interaction with TOPBP1. Phosphorylated by CK2 in response to DNA damage, promoting interaction with NBN and recruitment of the MRN complex to DNA damage sites. In terms of processing, sumoylation at Lys-1840 by PIAS4 following DNA damage promotes ubiquitin-mediated degradation. Post-translationally, ubiquitinated by RNF4, leading to proteasomal degradation; undergoes 'Lys-48'-linked polyubiquitination. As to expression, highly expressed in testis.

It localises to the nucleus. It is found in the chromosome. In terms of biological role, histone reader protein required for checkpoint-mediated cell cycle arrest in response to DNA damage within both the S phase and G2/M phases of the cell cycle. Specifically recognizes and binds histone H2AX phosphorylated at 'Ser-139', a marker of DNA damage, serving as a scaffold for the recruitment of DNA repair and signal transduction proteins to discrete foci of DNA damage sites. Also required for downstream events subsequent to the recruitment of these proteins. These include phosphorylation and activation of the ATM, CHEK1 and CHEK2 kinases, and stabilization of TP53/p53 and apoptosis. ATM and CHEK2 may also be activated independently by a parallel pathway mediated by TP53BP1. Required for chromosomal stability during mitosis by promoting recruitment of TOPBP1 to DNA double strand breaks (DSBs): TOPBP1 forms filamentous assemblies that bridge MDC1 and tether broken chromosomes during mitosis. Required for the repair of DSBs via homologous recombination by promoting recruitment of NBN component of the MRN complex to DSBs. This Homo sapiens (Human) protein is Mediator of DNA damage checkpoint protein 1.